The primary structure comprises 3411 residues: Genome polyprotein (3411 aa).

At Met1–Asp104 the chain is on the cytoplasmic side. The tract at residues Pro38 to Leu72 is hydrophobic; homodimerization of capsid protein C. The propeptide at Ser102–Gly121 is ER anchor for the capsid protein C, removed in mature form by serine protease NS3. The chain crosses the membrane as a helical span at residues Val105 to Val125. Residues Arg126–Arg244 are Extracellular-facing. N-linked (GlcNAc...) asparagine; by host glycosylation is found at Asn134 and Asn150. The chain crosses the membrane as a helical span at residues Trp245–Ser265. Topologically, residues Asn266–Arg270 are cytoplasmic. A helical transmembrane segment spans residues Val271–Ser285. Over Ala286–Leu730 the chain is Extracellular. Cystine bridges form between Cys288-Cys315, Cys345-Cys401, Cys345-Cys406, Cys359-Cys390, Cys377-Cys401, Cys377-Cys406, Cys467-Cys568, and Cys585-Cys615. Residues Asp383–Gly396 are fusion peptide. Residues Phe731–Ile751 traverse the membrane as a helical segment. At Asn752–Thr757 the chain is on the extracellular side. Residues Met758 to Ala778 form a helical membrane-spanning segment. Residues Asp779–Glu1132 are Extracellular-facing. Cystine bridges form between Cys782-Cys793, Cys833-Cys921, Cys957-Cys1002, Cys1058-Cys1107, Cys1069-Cys1091, and Cys1090-Cys1094. N-linked (GlcNAc...) asparagine; by host glycosylation is found at Asn908 and Asn986. A helical transmembrane segment spans residues Ile1133 to Lys1153. Residues Arg1154–Ala1201 lie on the Cytoplasmic side of the membrane. Residues Met1202–Leu1222 form a helical membrane-spanning segment. Topologically, residues Arg1223–Pro1287 are lumenal. The helical transmembrane segment at Val1288–Val1308 threads the bilayer. At Leu1309 to Ser1355 the chain is on the cytoplasmic side. Residues Ile1356–Phe1376 traverse the membrane as a helical segment. Residues Gln1377–Glu1378 are Lumenal-facing. Residues Met1379–Ala1399 form a helical membrane-spanning segment. The Cytoplasmic portion of the chain corresponds to Gly1400–Leu1456. The tract at residues Leu1407 to Val1446 is interacts with and activates NS3 protease. Residues Ala1457–Phe1477 constitute an intramembrane region (helical). Residues His1478 to Ala2157 are Cytoplasmic-facing. Residues Ser1485–Leu1665 enclose the Peptidase S7 domain. Catalysis depends on charge relay system; for serine protease NS3 activity residues His1537, Asp1561, and Ser1622. The region spanning Pro1669 to Gln1825 is the Helicase ATP-binding domain. An important for RNA-binding region spans residues Lys1673–Met1676. An ATP-binding site is contributed by Tyr1682 to Thr1689. The short motif at Asp1773–His1776 is the DEAH box element. The region spanning Glu1820–Tyr1997 is the Helicase C-terminal domain. Lys1877 carries the N6-acetyllysine; by host modification. A helical transmembrane segment spans residues Met2158–Phe2178. The Lumenal segment spans residues Met2179–Arg2186. An intramembrane region (helical) is located at residues Met2187–Lys2207. At Pro2208 to Thr2209 the chain is on the lumenal side. Residues His2210–Gly2230 form a helical membrane-spanning segment. The Cytoplasmic portion of the chain corresponds to Gln2231 to Ala2241. Residues Tyr2242–Leu2262 traverse the membrane as a helical segment. Residues Glu2263 to Gly2293 are Lumenal-facing. Residues Ala2294–Ile2314 constitute an intramembrane region (helical). The Lumenal segment spans residues Lys2315–Ile2360. A helical transmembrane segment spans residues Thr2361 to Leu2380. Residues Pro2381–Ala2421 are Cytoplasmic-facing. The chain crosses the membrane as a helical span at residues Leu2422–Met2442. The Lumenal portion of the chain corresponds to Cys2443–Thr2445. A helical membrane pass occupies residues Pro2446–Gly2466. Residues Asn2467 to Ile3411 are Cytoplasmic-facing. Residues Gly2507–Ser2771 enclose the mRNA cap 0-1 NS5-type MT domain. Ser2562 contributes to the S-adenosyl-L-methionine binding site. Position 2562 is a phosphoserine (Ser2562). The For 2'-O-MTase activity role is filled by Lys2567. Positions 2592, 2593, 2610, 2611, 2637, and 2638 each coordinate S-adenosyl-L-methionine. The For 2'-O-MTase activity role is filled by Asp2652. Ile2653 is an S-adenosyl-L-methionine binding site. Residues Lys2688 and Glu2724 each act as for 2'-O-MTase activity in the active site. S-adenosyl-L-methionine is bound at residue Tyr2726. A Nuclear localization signal motif is present at residues Arg2878–Arg2911. Residues Glu2945, His2949, Cys2954, and Cys2957 each contribute to the Zn(2+) site. A RdRp catalytic domain is found at Gly3035–Ala3187. Zn(2+) is bound by residues His3222, Cys3238, and Cys3357.

The protein in the N-terminal section; belongs to the class I-like SAM-binding methyltransferase superfamily. mRNA cap 0-1 NS5-type methyltransferase family. Homodimer. Interacts (via N-terminus) with host EXOC1 (via C-terminus); this interaction results in EXOC1 degradation through the proteasome degradation pathway. In terms of assembly, forms heterodimers with envelope protein E in the endoplasmic reticulum and Golgi. As to quaternary structure, homodimer; in the endoplasmic reticulum and Golgi. Interacts with protein prM. Interacts with non-structural protein 1. Homodimer; Homohexamer when secreted. Interacts with envelope protein E. In terms of assembly, interacts (via N-terminus) with serine protease NS3. As to quaternary structure, forms a heterodimer with serine protease NS3. May form homooligomers. Forms a heterodimer with NS2B. Interacts with non-structural protein 2A (via N-terminus). Interacts with NS4B. Interacts with unphosphorylated RNA-directed RNA polymerase NS5; this interaction stimulates RNA-directed RNA polymerase NS5 guanylyltransferase activity. NS3 interacts with host PDCD6IP; this interaction contributes to virion release. In terms of assembly, interacts with serine protease NS3. As to quaternary structure, homodimer. Interacts with host STAT2; this interaction prevents the establishment of cellular antiviral state. Interacts with serine protease NS3. Interacts with host TRIM23; this interaction leads to NS5 ubiquitination. In terms of processing, specific enzymatic cleavages in vivo yield mature proteins. The nascent capsid protein C contains a C-terminal hydrophobic domain that act as a signal sequence for translocation of prM into the lumen of the ER. Mature capsid protein C is cleaved at a site upstream of this hydrophobic domain by NS3. prM is cleaved in post-Golgi vesicles by a host furin, releasing the mature small envelope protein M, and peptide pr. Non-structural protein 2A-alpha, a C-terminally truncated form of non-structural protein 2A, results from partial cleavage by NS3. Specific enzymatic cleavages in vivo yield mature proteins peptide 2K acts as a signal sequence and is removed from the N-terminus of NS4B by the host signal peptidase in the ER lumen. Signal cleavage at the 2K-4B site requires a prior NS3 protease-mediated cleavage at the 4A-2K site. Cleaved in post-Golgi vesicles by a host furin, releasing the mature small envelope protein M, and peptide pr. This cleavage is incomplete as up to 30% of viral particles still carry uncleaved prM. Post-translationally, N-glycosylated. In terms of processing, N-glycosylated. The excreted form is glycosylated and this is required for efficient secretion of the protein from infected cells. Polyubiquitinated; ubiquitination is probably mediated by host TRIM23 and is prerequisite for NS5-STAT2 interaction. NS5 is not ISGylated or sumoylated. Post-translationally, acetylated by host KAT5. Acetylation modulates NS3 RNA-binding and unwinding activities and plays an important positive role for viral replication. In terms of processing, phosphorylated on serines residues. This phosphorylation may trigger NS5 nuclear localization.

It is found in the virion. Its subcellular location is the host nucleus. The protein resides in the host cytoplasm. The protein localises to the host perinuclear region. It localises to the secreted. It is found in the virion membrane. Its subcellular location is the host endoplasmic reticulum membrane. The catalysed reaction is Selective hydrolysis of -Xaa-Xaa-|-Yaa- bonds in which each of the Xaa can be either Arg or Lys and Yaa can be either Ser or Ala.. It carries out the reaction RNA(n) + a ribonucleoside 5'-triphosphate = RNA(n+1) + diphosphate. The enzyme catalyses a ribonucleoside 5'-triphosphate + H2O = a ribonucleoside 5'-diphosphate + phosphate + H(+). It catalyses the reaction ATP + H2O = ADP + phosphate + H(+). The catalysed reaction is a 5'-end (5'-triphosphoguanosine)-ribonucleoside in mRNA + S-adenosyl-L-methionine = a 5'-end (N(7)-methyl 5'-triphosphoguanosine)-ribonucleoside in mRNA + S-adenosyl-L-homocysteine. It carries out the reaction a 5'-end (N(7)-methyl 5'-triphosphoguanosine)-ribonucleoside in mRNA + S-adenosyl-L-methionine = a 5'-end (N(7)-methyl 5'-triphosphoguanosine)-(2'-O-methyl-ribonucleoside) in mRNA + S-adenosyl-L-homocysteine + H(+). Its function is as follows. Plays a role in virus budding by binding to the cell membrane and gathering the viral RNA into a nucleocapsid that forms the core of a mature virus particle. During virus entry, may induce genome penetration into the host cytoplasm after hemifusion induced by the surface proteins. Can migrate to the cell nucleus where it modulates host functions. Functionally, inhibits RNA silencing by interfering with host Dicer. In terms of biological role, prevents premature fusion activity of envelope proteins in trans-Golgi by binding to envelope protein E at pH6.0. After virion release in extracellular space, gets dissociated from E dimers. Acts as a chaperone for envelope protein E during intracellular virion assembly by masking and inactivating envelope protein E fusion peptide. prM is the only viral peptide matured by host furin in the trans-Golgi network probably to avoid catastrophic activation of the viral fusion activity in acidic Golgi compartment prior to virion release. prM-E cleavage is inefficient, and many virions are only partially matured. These uncleaved prM would play a role in immune evasion. Its function is as follows. May play a role in virus budding. Exerts cytotoxic effects by activating a mitochondrial apoptotic pathway through M ectodomain. May display a viroporin activity. Functionally, binds to host cell surface receptor and mediates fusion between viral and cellular membranes. Envelope protein is synthesized in the endoplasmic reticulum in the form of heterodimer with protein prM. They play a role in virion budding in the ER, and the newly formed immature particle is covered with 60 spikes composed of heterodimer between precursor prM and envelope protein E. The virion is transported to the Golgi apparatus where the low pH causes dissociation of PrM-E heterodimers and formation of E homodimers. prM-E cleavage is inefficient, and many virions are only partially matured. These uncleaved prM would play a role in immune evasion. In terms of biological role, involved in immune evasion, pathogenesis and viral replication. Once cleaved off the polyprotein, is targeted to three destinations: the viral replication cycle, the plasma membrane and the extracellular compartment. Essential for viral replication. Required for formation of the replication complex and recruitment of other non-structural proteins to the ER-derived membrane structures. Excreted as a hexameric lipoparticle that plays a role against host immune response. Antagonizing the complement function. Binds to the host macrophages and dendritic cells. Inhibits signal transduction originating from Toll-like receptor 3 (TLR3). Component of the viral RNA replication complex that functions in virion assembly and antagonizes the host immune response. Its function is as follows. Required cofactor for the serine protease function of NS3. May have membrane-destabilizing activity and form viroporins. Functionally, displays three enzymatic activities: serine protease, NTPase and RNA helicase. NS3 serine protease, in association with NS2B, performs its autocleavage and cleaves the polyprotein at dibasic sites in the cytoplasm: C-prM, NS2A-NS2B, NS2B-NS3, NS3-NS4A, NS4A-2K and NS4B-NS5. NS3 RNA helicase binds RNA and unwinds dsRNA in the 3' to 5' direction. Also plays a role in virus assembly. In terms of biological role, regulates the ATPase activity of the NS3 helicase activity. NS4A allows NS3 helicase to conserve energy during unwinding. Functions as a signal peptide for NS4B and is required for the interferon antagonism activity of the latter. Its function is as follows. Induces the formation of ER-derived membrane vesicles where the viral replication takes place. Inhibits interferon (IFN)-induced host STAT1 phosphorylation and nuclear translocation, thereby preventing the establishment of cellular antiviral state by blocking the IFN-alpha/beta pathway. Functionally, replicates the viral (+) and (-) RNA genome, and performs the capping of genomes in the cytoplasm. NS5 methylates viral RNA cap at guanine N-7 and ribose 2'-O positions. Besides its role in RNA genome replication, also prevents the establishment of cellular antiviral state by blocking the interferon-alpha/beta (IFN-alpha/beta) signaling pathway. IFN-I induces binding of NS5 to host IFN-activated transcription factor STAT2, preventing its transcriptional activity. Host TRIM23 is the E3 ligase that interacts with and polyubiquitinates NS5 to promote its binding to STAT2 and trigger IFN-I signaling inhibition. The protein is Genome polyprotein of Yellow fever virus (isolate Ivory Coast/85-82H/1982) (YFV).